A 447-amino-acid chain; its full sequence is Omega-6 fatty acid desaturase, chloroplastic (447 aa).

The transit peptide at 1–65 (MESAITISNH…TRRKSTLVQA (65 aa)) directs the protein to the chloroplast. Val66 carries the N-acetylvaline modification. Residues 171–175 (HDCAH) carry the Histidine box-1 motif. The short motif at 207-211 (HDQHH) is the Histidine box-2 element. Positions 367–371 (HIPHH) match the Histidine box-3 motif.

This sequence belongs to the fatty acid desaturase type 1 family.

It localises to the plastid. It is found in the chloroplast membrane. It catalyses the reaction a (9Z)-octadecenoyl-containing glycerolipid + 2 reduced [2Fe-2S]-[ferredoxin] + O2 + 2 H(+) = a (9Z,12Z)-octadecadienoyl-containing glycerolipid + 2 oxidized [2Fe-2S]-[ferredoxin] + 2 H2O. It participates in lipid metabolism; polyunsaturated fatty acid biosynthesis. Its function is as follows. Chloroplast omega-6 fatty acid desaturase introduces the second double bond in the biosynthesis of 16:3 and 18:3 fatty acids, important constituents of plant membranes. It is thought to use ferredoxin as an electron donor and to act on fatty acids esterified to galactolipids, sulfolipids and phosphatidylglycerol. The sequence is that of Omega-6 fatty acid desaturase, chloroplastic from Spinacia oleracea (Spinach).